We begin with the raw amino-acid sequence, 439 residues long: Nuclear hormone receptor family member nhr-97 (439 aa).

The segment covering 1–13 (MSGDAQPSSNQRA) has biased composition (polar residues). The segment at 1–22 (MSGDAQPSSNQRATEARPPPSP) is disordered. Residues 32-108 (GALCVVCGDR…VGMKIEAVKM (77 aa)) constitute a DNA-binding region (nuclear receptor). 2 NR C4-type zinc fingers span residues 35–56 (CVVC…CHGC) and 72–96 (CRYG…FHRC). The tract at residues 112–135 (LTKRKKEKTDEDDTDDGGSHESFE) is disordered. Positions 173-408 (FVQPSLQNLL…GEGLLFWQLY (236 aa)) constitute an NR LBD domain.

It belongs to the nuclear hormone receptor family.

It localises to the nucleus. Functionally, orphan nuclear receptor. The chain is Nuclear hormone receptor family member nhr-97 (nhr-97) from Caenorhabditis elegans.